The following is a 181-amino-acid chain: MECNQNYYQILDVDNTATKQQITQSYKKLVRKYHPDRNKNPEAIEKFKLIQSSYEVLSDDLKRLNYDSYLTACSNNNNFDVNNNFDVNNNFDVNNDLFNYYFIMKELFDKYDLNEEEQQEILDIFNIEFYQNNINTIGIDKANEILINKLIEYIPKITIKRISGQNKYLGSVVEFFFSFIT.

The J domain occupies 6-70 (NYYQILDVDN…LKRLNYDSYL (65 aa)).

The polypeptide is Putative J domain-containing protein R266 (Acanthamoeba polyphaga (Amoeba)).